The sequence spans 260 residues: MADS-box transcription factor 29 (260 aa).

Residues 1 to 61 form the MADS-box domain; it reads MGRGKIEIKR…GKMFEYCSPT (61 aa). One can recognise a K-box domain in the interval 85–175; sequence DQQIFVEMTR…CRMINENHHQ (91 aa).

Expressed in developing seeds.

The protein resides in the nucleus. In terms of biological role, probable transcription factor. In Oryza sativa subsp. japonica (Rice), this protein is MADS-box transcription factor 29 (MADS29).